Consider the following 127-residue polypeptide: Holo-[acyl-carrier-protein] synthase (127 aa).

Mg(2+)-binding residues include aspartate 8 and glutamate 56.

The protein belongs to the P-Pant transferase superfamily. AcpS family. Mg(2+) serves as cofactor.

The protein resides in the cytoplasm. It carries out the reaction apo-[ACP] + CoA = holo-[ACP] + adenosine 3',5'-bisphosphate + H(+). In terms of biological role, transfers the 4'-phosphopantetheine moiety from coenzyme A to a Ser of acyl-carrier-protein. The polypeptide is Holo-[acyl-carrier-protein] synthase (Cytophaga hutchinsonii (strain ATCC 33406 / DSM 1761 / CIP 103989 / NBRC 15051 / NCIMB 9469 / D465)).